Consider the following 252-residue polypeptide: MRPLIVIGNWKMNGNLASNQDWVKTVARGMESGMPAGRKFAVCPSFPYLSQCSTLIKEHSLAFLSLGAQDVSAHGAGAYTGEVGASMLKEMGCEYVIVGHSERRQMHQEADESVAAKALQALDSGMTPVICVGETADERNSGRAEEIVCSQVAKQVSVLQDRLADCLIAYEPVWAIGTGKVASAQVAQDMHRAIRMQLAEFDEDVASHVGILYGGSVKPDNAVELFAMPDIDGGLVGGASLNPQDFLAICQA.

Position 9–11 (9–11) interacts with substrate; it reads NWK. Histidine 100 acts as the Electrophile in catalysis. The Proton acceptor role is filled by glutamate 171. Substrate contacts are provided by residues glycine 177, serine 216, and 237 to 238; that span reads GG.

This sequence belongs to the triosephosphate isomerase family. In terms of assembly, homodimer.

The protein localises to the cytoplasm. It catalyses the reaction D-glyceraldehyde 3-phosphate = dihydroxyacetone phosphate. The protein operates within carbohydrate biosynthesis; gluconeogenesis. It functions in the pathway carbohydrate degradation; glycolysis; D-glyceraldehyde 3-phosphate from glycerone phosphate: step 1/1. In terms of biological role, involved in the gluconeogenesis. Catalyzes stereospecifically the conversion of dihydroxyacetone phosphate (DHAP) to D-glyceraldehyde-3-phosphate (G3P). This Polynucleobacter asymbioticus (strain DSM 18221 / CIP 109841 / QLW-P1DMWA-1) (Polynucleobacter necessarius subsp. asymbioticus) protein is Triosephosphate isomerase.